The primary structure comprises 86 residues: UPF0297 protein BBR47_19030 (86 aa).

The protein belongs to the UPF0297 family.

This is UPF0297 protein BBR47_19030 from Brevibacillus brevis (strain 47 / JCM 6285 / NBRC 100599).